Consider the following 82-residue polypeptide: Small ribosomal subunit protein bS18 (82 aa).

Belongs to the bacterial ribosomal protein bS18 family. Part of the 30S ribosomal subunit. Forms a tight heterodimer with protein bS6.

Functionally, binds as a heterodimer with protein bS6 to the central domain of the 16S rRNA, where it helps stabilize the platform of the 30S subunit. This chain is Small ribosomal subunit protein bS18, found in Bifidobacterium adolescentis (strain ATCC 15703 / DSM 20083 / NCTC 11814 / E194a).